Here is a 488-residue protein sequence, read N- to C-terminus: (S)-N-methylcoclaurine 3'-hydroxylase isozyme 2 (488 aa).

Residues Val3–Ser23 traverse the membrane as a helical segment. Cys430 is a binding site for heme.

This sequence belongs to the cytochrome P450 family. Heme serves as cofactor.

It is found in the endoplasmic reticulum membrane. The protein localises to the microsome membrane. The catalysed reaction is (S)-N-methylcoclaurine + reduced [NADPH--hemoprotein reductase] + O2 = (S)-3'-hydroxy-N-methylcoclaurine + oxidized [NADPH--hemoprotein reductase] + H2O + H(+). The protein operates within alkaloid biosynthesis; (S)-reticuline biosynthesis; (S)-reticuline from (S)-norcoclaurine: step 3/4. Functionally, 3'-hydroxylation of (S)-N-methylcoclaurine. In Eschscholzia californica (California poppy), this protein is (S)-N-methylcoclaurine 3'-hydroxylase isozyme 2 (CYP80B2).